Consider the following 190-residue polypeptide: UPF0725 protein At2g20625 (190 aa).

This sequence belongs to the UPF0725 (EMB2204) family.

This Arabidopsis thaliana (Mouse-ear cress) protein is UPF0725 protein At2g20625.